The primary structure comprises 690 residues: Eukaryotic translation initiation factor 3 subunit B (690 aa).

The span at 1 to 11 (MAKKKSEEHSS) shows a compositional bias: basic and acidic residues. Residues 1 to 33 (MAKKKSEEHSSADANDSDYQEEPNFDDPPNFVD) are disordered. Residues 15-25 (NDSDYQEEPNF) are compositionally biased toward acidic residues. Residues 57 to 141 (SVVVVDNIPK…HTFAVNLFTD (85 aa)) enclose the RRM domain. WD repeat units lie at residues 207–246 (TRER…KIQK), 293–331 (DGMS…LLDL), 334–369 (IKIP…TLME), 442–484 (EIRE…KPSL), and 530–575 (PDHF…IKRT). Positions 614–645 (QKDRLRLTRASKELLEKRSQLRETFMEYRNKR) form a coiled coil.

The protein belongs to the eIF-3 subunit B family. As to quaternary structure, component of the eukaryotic translation initiation factor 3 (eIF-3) complex. The eIF-3 complex interacts with pix. Interacts with mxt.

It localises to the cytoplasm. In terms of biological role, RNA-binding component of the eukaryotic translation initiation factor 3 (eIF-3) complex, which is involved in protein synthesis of a specialized repertoire of mRNAs and, together with other initiation factors, stimulates binding of mRNA and methionyl-tRNAi to the 40S ribosome. The eIF-3 complex specifically targets and initiates translation of a subset of mRNAs involved in cell proliferation. This chain is Eukaryotic translation initiation factor 3 subunit B, found in Drosophila willistoni (Fruit fly).